A 49-amino-acid polypeptide reads, in one-letter code: Fungus-induced-related protein 16 (49 aa).

This chain is Fungus-induced-related protein 16 (fipr-16), found in Caenorhabditis elegans.